Here is a 37-residue protein sequence, read N- to C-terminus: MKIRASVRKICTKCQLIRRKGRIRVICSNPRHKQRQR.

The protein belongs to the bacterial ribosomal protein bL36 family.

It localises to the plastid. The protein localises to the chloroplast. The chain is Large ribosomal subunit protein bL36c from Pelargonium hortorum (Common geranium).